We begin with the raw amino-acid sequence, 341 residues long: tRNA N6-adenosine threonylcarbamoyltransferase (341 aa).

Positions 111 and 115 each coordinate Fe cation. Substrate is bound by residues V133–G137, D166, G179, D183, and N271. D299 is a binding site for Fe cation.

This sequence belongs to the KAE1 / TsaD family. The cofactor is Fe(2+).

The protein resides in the cytoplasm. It carries out the reaction L-threonylcarbamoyladenylate + adenosine(37) in tRNA = N(6)-L-threonylcarbamoyladenosine(37) in tRNA + AMP + H(+). Functionally, required for the formation of a threonylcarbamoyl group on adenosine at position 37 (t(6)A37) in tRNAs that read codons beginning with adenine. Is involved in the transfer of the threonylcarbamoyl moiety of threonylcarbamoyl-AMP (TC-AMP) to the N6 group of A37, together with TsaE and TsaB. TsaD likely plays a direct catalytic role in this reaction. The polypeptide is tRNA N6-adenosine threonylcarbamoyltransferase (Fusobacterium nucleatum subsp. nucleatum (strain ATCC 25586 / DSM 15643 / BCRC 10681 / CIP 101130 / JCM 8532 / KCTC 2640 / LMG 13131 / VPI 4355)).